The primary structure comprises 429 residues: Tyrosine-protein kinase STYK1 (429 aa).

The helical transmembrane segment at 30 to 50 (VIIVPALLVGGFLILLAIILW) threads the bilayer. Residues 58–83 (SQRQSPGPRGTASVPASRGRSQEAAG) are disordered. Positions 119–390 (LEVLEQIHSG…GQLLQRLEAA (272 aa)) constitute a Protein kinase domain. ATP contacts are provided by residues 125 to 133 (IHSGSCGTL) and Lys152. Catalysis depends on Asp256, which acts as the Proton acceptor.

This sequence belongs to the protein kinase superfamily. Tyr protein kinase family. Highly expressed in colon and small intestine. Weakly or not expressed in spleen, skeletal muscle, liver, kidney, heart and brain. Expressed in transformed kidney cell lines (COS-1 and HEK293T).

It is found in the membrane. The catalysed reaction is L-tyrosyl-[protein] + ATP = O-phospho-L-tyrosyl-[protein] + ADP + H(+). Probable tyrosine protein-kinase, which has strong transforming capabilities on a variety of cell lines including NIH 3T3 fibroblasts and on athymic nude mice. When overexpressed, it can also induce tumor cell invasion as well as metastasis in distant organs. May act by activating both MAP kinase and phosphatidylinositol 3'-kinases (PI3K) pathways. In Mus musculus (Mouse), this protein is Tyrosine-protein kinase STYK1 (Styk1).